The primary structure comprises 265 residues: Probable FAD synthase (265 aa).

This sequence belongs to the PAPS reductase family. FAD1 subfamily.

The catalysed reaction is FMN + ATP + H(+) = FAD + diphosphate. It functions in the pathway cofactor biosynthesis; FAD biosynthesis; FAD from FMN: step 1/1. In terms of biological role, adenylates FMN to FAD. This Schizosaccharomyces pombe (strain 972 / ATCC 24843) (Fission yeast) protein is Probable FAD synthase.